The sequence spans 732 residues: uncharacterized protein (732 aa).

Positions 145-207 (ETLRDSVINP…RRRPEMASPH (63 aa)) are disordered. Positions 170 to 179 (KGHETLERGS) are enriched in basic and acidic residues. A Reverse transcriptase domain is found at 176–524 (ERGSKALGPE…KKIPFLGYLI (349 aa)).

The protein resides in the mitochondrion. This is an uncharacterized protein from Marchantia polymorpha (Common liverwort).